Here is a 1099-residue protein sequence, read N- to C-terminus: MAHLGPTPPPHSLNYKSEDRLSEQDWPAYFKVPCCGVDTSQIESEEAEVDVRERETQRDREPKRARDLTLRDSCTDNSMQFGTRTTTAEPGFMGTWQNADTNLLFRMSQQAIRCTLVNCTCECFQPGKINLRTCDQCKHGWVAHALDKLSTQHLYHPTQVEIVQSNVVFDISSLMLYGTQAVPVRLKILLDRLFSVLKQEEVLHILHGLGWTLRDYVRGYILQDAAGKVLDRWAIMSREEEIITLQQFLRFGETKSIVELMAIQEKEGQAVAVPSSKTDSDIRTFIESNNRTRSPSLLAHLENSNPSSIHHFENIPNSLAFLLPFQYINPVSAPLLGLPPNGLLLEQPGLRLREPSLSTQNEYNESSESEVSPTPYKNDQTPNRNALTSITNVEPKTEPACVSPIQNSAPVSDLTKTEHPKSSFRIHRMRRMGSASRKGRVFCNACGKTFYDKGTLKIHYNAVHLKIKHRCTIEGCNMVFSSLRSRNRHSANPNPRLHMPMLRNNRDKDLIRATSGAATPVIASTKSNLALTSPGRPPMGFTTPPLDPVLQNPLPSQLVFSGLKTVQPVPPFYRSLLTPGEMVSPPTSLPTSPIIPTSGTIEQHPPPPSEPVVPAVMMATHEPSADLAPKKKPRKSSMPVKIEKEIIDTADEFDDEDDDPNDGGAVVNDMSHDNHCHSQEEMSPGMSVKDFSKHNRTRCISRTEIRRADSMTSEDQEPERDYENESESSEPKLGEESMEGDEHIHSEVSEKVLMNSERPDENHSEPSHQDVIKVKEEFTDPTYDMFYMSQYGLYNGGGASMAALHESFTSSLNYGSPQKFSPEGDLCSSPDPKICYVCKKSFKSSYSVKLHYRNVHLKEMHVCTVAGCNAAFPSRRSRDRHSANINLHRKLLTKELDDMGLDSSQPSLSKDLRDEFLVKIYGAQHPMGLDVREDASSPAGTEDSHLNGYGRGMAEDYMVLDLSTTSSLQSSSSIHSSRESDAGSDEGILLDDIDGASDSGESAHKAEAPALPGSLGAEVSGSLMFSSLSGSNGGIMCNICHKMYSNKGTLRVHYKTVHLREMHKCKVPGCNMMFSSVRSRNRHSQNPNLHKNIPFTSVD.

The tract at residues 45-66 (EEAEVDVRERETQRDREPKRAR) is disordered. Positions 49–66 (VDVRERETQRDREPKRAR) are enriched in basic and acidic residues. Lysine 277 is covalently cross-linked (Glycyl lysine isopeptide (Lys-Gly) (interchain with G-Cter in SUMO2)). The tract at residues 357-385 (LSTQNEYNESSESEVSPTPYKNDQTPNRN) is disordered. Low complexity predominate over residues 361–372 (NEYNESSESEVS). A compositionally biased stretch (polar residues) spans 375-385 (PYKNDQTPNRN). Residues lysine 396, lysine 416, and lysine 421 each participate in a glycyl lysine isopeptide (Lys-Gly) (interchain with G-Cter in SUMO2) cross-link. Residues 397–423 (TEPACVSPIQNSAPVSDLTKTEHPKSS) are disordered. The C2H2-type 1 zinc-finger motif lies at 441-464 (VFCNACGKTFYDKGTLKIHYNAVH). The residue at position 561 (serine 561) is a Phosphoserine. 2 disordered regions span residues 622 to 641 (EPSADLAPKKKPRKSSMPVK) and 648 to 742 (DTAD…EGDE). A Glycyl lysine isopeptide (Lys-Gly) (interchain with G-Cter in SUMO2) cross-link involves residue lysine 641. The span at 648–661 (DTADEFDDEDDDPN) shows a compositional bias: acidic residues. 2 stretches are compositionally biased toward basic and acidic residues: residues 670 to 680 (MSHDNHCHSQE) and 719 to 742 (ERDYENESESSEPKLGEESMEGDE). Residues 833 to 856 (KICYVCKKSFKSSYSVKLHYRNVH) form a C2H2-type 2 zinc finger. Residues lysine 894 and lysine 919 each participate in a glycyl lysine isopeptide (Lys-Gly) (interchain with G-Cter in SUMO2) cross-link. Disordered stretches follow at residues 929-948 (LDVREDASSPAGTEDSHLNG) and 968-1008 (LQSS…KAEA). A compositionally biased stretch (acidic residues) spans 982–995 (AGSDEGILLDDIDG). 2 C2H2-type zinc fingers span residues 1035-1058 (IMCNICHKMYSNKGTLRVHYKTVH) and 1063-1090 (HKCKVPGCNMMFSSVRSRNRHSQNPNLH). Positions 1079 to 1099 (SRNRHSQNPNLHKNIPFTSVD) are disordered.

Highly expressed in testis, uterus and small intestine, and weakly expressed in colon and prostate. Also expressed in skin, primary keratinocytes, immortalized keratinocytes, and HeLa and HEK293 cells. Not detected in blood, thymus, spleen or Hep-G2 cells.

The protein resides in the nucleus. In terms of biological role, probable transcription factor specific for skin keratinocytes. May play a role in the differentiation of spermatozoa and oocytes. May also play an important role in early urinary-tract development. This Homo sapiens (Human) protein is Zinc finger protein basonuclin-2.